A 374-amino-acid chain; its full sequence is GPN-loop GTPase 1 (374 aa).

A2 carries the post-translational modification N-acetylalanine. 29–34 contributes to the GTP binding site; it reads GSGKTT. The short motif at 86–88 is the Gly-Pro-Asn (GPN)-loop; involved in dimer interface element; sequence GPN. 189-192 serves as a coordination point for GTP; that stretch reads NKTD. S301, S312, and S314 each carry phosphoserine. Positions 326 to 354 are disordered; the sequence is RGTLDEEDEEADSDTDDIDHRVTEESHEE. At T328 the chain carries Phosphothreonine. Residues 330–342 are compositionally biased toward acidic residues; it reads DEEDEEADSDTDD. At S338 the chain carries Phosphoserine. At T340 the chain carries Phosphothreonine. Positions 343 to 354 are enriched in basic and acidic residues; it reads IDHRVTEESHEE.

This sequence belongs to the GPN-loop GTPase family. In terms of assembly, heterodimer with GPN3. Binds to RNA polymerase II (RNAPII). Interacts directly with RNAPII subunits RPB4 and RPB7 and the CTD of RPB1. Interacts with XPA. As to expression, expressed ubiquitously.

The protein resides in the cytoplasm. Its subcellular location is the nucleus. Functionally, small GTPase required for proper nuclear import of RNA polymerase II (RNAPII). May act at an RNAP assembly step prior to nuclear import. Forms an interface between the RNA polymerase II enzyme and chaperone/scaffolding proteins, suggesting that it is required to connect RNA polymerase II to regulators of protein complex formation. May be involved in nuclear localization of XPA. In Homo sapiens (Human), this protein is GPN-loop GTPase 1.